A 427-amino-acid polypeptide reads, in one-letter code: Enolase (427 aa).

Gln163 lines the (2R)-2-phosphoglycerate pocket. Residue Glu205 is the Proton donor of the active site. Positions 242, 285, and 312 each coordinate Mg(2+). The (2R)-2-phosphoglycerate site is built by Lys337, Arg366, Ser367, and Lys388. The Proton acceptor role is filled by Lys337.

It belongs to the enolase family. It depends on Mg(2+) as a cofactor.

It localises to the cytoplasm. Its subcellular location is the secreted. The protein localises to the cell surface. The catalysed reaction is (2R)-2-phosphoglycerate = phosphoenolpyruvate + H2O. It functions in the pathway carbohydrate degradation; glycolysis; pyruvate from D-glyceraldehyde 3-phosphate: step 4/5. Its function is as follows. Catalyzes the reversible conversion of 2-phosphoglycerate (2-PG) into phosphoenolpyruvate (PEP). It is essential for the degradation of carbohydrates via glycolysis. The chain is Enolase from Burkholderia multivorans (strain ATCC 17616 / 249).